The chain runs to 144 residues: Large ribosomal subunit protein uL16 (144 aa).

This sequence belongs to the universal ribosomal protein uL16 family. In terms of assembly, part of the 50S ribosomal subunit.

Functionally, binds 23S rRNA and is also seen to make contacts with the A and possibly P site tRNAs. This is Large ribosomal subunit protein uL16 from Halalkalibacterium halodurans (strain ATCC BAA-125 / DSM 18197 / FERM 7344 / JCM 9153 / C-125) (Bacillus halodurans).